A 122-amino-acid chain; its full sequence is uncharacterized protein (122 aa).

This is an uncharacterized protein from Haemophilus phage HP1 (strain HP1c1) (Bacteriophage HP1).